The following is a 159-amino-acid chain: 6,7-dimethyl-8-ribityllumazine synthase (159 aa).

5-amino-6-(D-ribitylamino)uracil contacts are provided by residues tryptophan 30, 64–66 (TFE), and 88–90 (CVI). 93–94 (ET) serves as a coordination point for (2S)-2-hydroxy-3-oxobutyl phosphate. Catalysis depends on histidine 96, which acts as the Proton donor. Phenylalanine 121 is a 5-amino-6-(D-ribitylamino)uracil binding site. A (2S)-2-hydroxy-3-oxobutyl phosphate-binding site is contributed by arginine 135.

It belongs to the DMRL synthase family.

It carries out the reaction (2S)-2-hydroxy-3-oxobutyl phosphate + 5-amino-6-(D-ribitylamino)uracil = 6,7-dimethyl-8-(1-D-ribityl)lumazine + phosphate + 2 H2O + H(+). It functions in the pathway cofactor biosynthesis; riboflavin biosynthesis; riboflavin from 2-hydroxy-3-oxobutyl phosphate and 5-amino-6-(D-ribitylamino)uracil: step 1/2. Functionally, catalyzes the formation of 6,7-dimethyl-8-ribityllumazine by condensation of 5-amino-6-(D-ribitylamino)uracil with 3,4-dihydroxy-2-butanone 4-phosphate. This is the penultimate step in the biosynthesis of riboflavin. The protein is 6,7-dimethyl-8-ribityllumazine synthase of Cytophaga hutchinsonii (strain ATCC 33406 / DSM 1761 / CIP 103989 / NBRC 15051 / NCIMB 9469 / D465).